The primary structure comprises 168 residues: Protein YciE (168 aa).

The protein is Protein YciE (yciE) of Escherichia coli (strain K12).